A 445-amino-acid chain; its full sequence is Ribosome biogenesis protein YTM1 (445 aa).

The ubiquitin-like (UBL) domain stretch occupies residues 8–89 (VKVKFFTREQ…EAVLNVEYTR (82 aa)). The interval 99 to 445 (SFSNEDWVSA…FNKGDNIFKN (347 aa)) is sufficient for interaction with ERB1 and association with 66S pre-ribosomes. WD repeat units follow at residues 101–138 (SNED…EKQY), 140–178 (GHTG…VKHV), 195–232 (GHQA…MTAV), 270–310 (SHKA…CVDT), 312–351 (STSY…SAKI), 358–398 (GHKN…SIYT), and 409–445 (GIND…IFKN).

Belongs to the WD repeat WDR12/YTM1 family. As to quaternary structure, component of the NOP7 complex, composed of ERB1, NOP7 and YTM1. The complex is held together by ERB1, which interacts with NOP7 via its N-terminal domain and with YTM1 via a high-affinity interaction between the seven-bladed beta-propeller domains of the 2 proteins. The NOP7 complex associates with the 66S pre-ribosome. Interacts (via UBL domain) with MDN1 (via VWFA/MIDAS domain).

Its subcellular location is the nucleus. It is found in the nucleolus. The protein localises to the nucleoplasm. Its function is as follows. Component of the NOP7 complex, which is required for maturation of the 25S and 5.8S ribosomal RNAs and formation of the 60S ribosome. In Eremothecium gossypii (strain ATCC 10895 / CBS 109.51 / FGSC 9923 / NRRL Y-1056) (Yeast), this protein is Ribosome biogenesis protein YTM1.